A 167-amino-acid polypeptide reads, in one-letter code: Protein DLS1 (167 aa).

Position 17 is a phosphoserine (Ser17).

Component of the ISW2 complex, which at least consists of ISW2, ITC1, DLS1 and DPB4.

It localises to the nucleus. In terms of biological role, functions as a component of the ISW2 complex, which acts in remodeling the chromatin by catalyzing an ATP-dependent alteration in the structure of nucleosomal DNA. The ISW2 complex is involved in coordinating transcriptional repression and in inheritance of telomeric silencing. It is involved in repression of MAT a-specific genes, INO1, and early meiotic genes during mitotic growth dependent upon transcription factor UME6 and in a parallel pathway to the RPD3-SIN3 histone deacetylase complex. DLS1 is partially required for the ISW2 complex chromatin remodeling activity and is not required for its interaction with chromatin. The protein is Protein DLS1 (DLS1) of Saccharomyces cerevisiae (strain ATCC 204508 / S288c) (Baker's yeast).